We begin with the raw amino-acid sequence, 235 residues long: Large ribosomal subunit protein uL1 (235 aa).

Belongs to the universal ribosomal protein uL1 family. As to quaternary structure, part of the 50S ribosomal subunit.

Its function is as follows. Binds directly to 23S rRNA. The L1 stalk is quite mobile in the ribosome, and is involved in E site tRNA release. In terms of biological role, protein L1 is also a translational repressor protein, it controls the translation of the L11 operon by binding to its mRNA. The sequence is that of Large ribosomal subunit protein uL1 from Mycobacterium sp. (strain JLS).